Here is a 131-residue protein sequence, read N- to C-terminus: Large ribosomal subunit protein bL17 (131 aa).

Belongs to the bacterial ribosomal protein bL17 family. Part of the 50S ribosomal subunit. Contacts protein L32.

This Cupriavidus metallidurans (strain ATCC 43123 / DSM 2839 / NBRC 102507 / CH34) (Ralstonia metallidurans) protein is Large ribosomal subunit protein bL17.